Reading from the N-terminus, the 106-residue chain is Small ribosomal subunit protein uS10 (106 aa).

Belongs to the universal ribosomal protein uS10 family. As to quaternary structure, part of the 30S ribosomal subunit.

Its function is as follows. Involved in the binding of tRNA to the ribosomes. The chain is Small ribosomal subunit protein uS10 from Parasynechococcus marenigrum (strain WH8102).